A 134-amino-acid chain; its full sequence is Small ribosomal subunit protein uS8c (134 aa).

Belongs to the universal ribosomal protein uS8 family. Part of the 30S ribosomal subunit.

It localises to the plastid. The protein resides in the chloroplast. One of the primary rRNA binding proteins, it binds directly to 16S rRNA central domain where it helps coordinate assembly of the platform of the 30S subunit. The protein is Small ribosomal subunit protein uS8c (rps8) of Gossypium hirsutum (Upland cotton).